Consider the following 605-residue polypeptide: ABC transporter E family member 2 (605 aa).

Positions 46-75 constitute a 4Fe-4S ferredoxin-type domain; sequence KLAFISEELCIGCGICVKKCPFEAIQIINL. ABC transporter domains follow at residues 70–315 and 344–568; these read IQII…FLAG and IQSY…LSHL. ATP is bound by residues 110 to 117 and 381 to 388; these read GTNGIGKS and GENGTGKT.

The protein belongs to the ABC transporter superfamily. ABCE family. In terms of tissue distribution, expressed in roots, stems, leaves, flowers and siliques.

It localises to the membrane. The polypeptide is ABC transporter E family member 2 (ABCE2) (Arabidopsis thaliana (Mouse-ear cress)).